A 2961-amino-acid polypeptide reads, in one-letter code: Zinc finger ZZ-type and EF-hand domain-containing protein 1 (2961 aa).

Residues 1–41 are disordered; the sequence is MGNAPSHSSEDEAAAAGGEGWGPHQDWAAVSGTTPGPGVAA. The N-myristoyl glycine moiety is linked to residue Gly-2. The region spanning 111 to 146 is the EF-hand domain; sequence CSSEQFEEAFAQFDAEGDGTVDAENMLEALKNSSGA. One can recognise a DOC domain in the interval 226 to 405; that stretch reads LVQKEKESPG…AIWYWSLLTS (180 aa). A phosphoserine mark is found at Ser-240, Ser-1475, Ser-1488, and Ser-1509. The segment at 1446–1531 is disordered; that stretch reads TADETSHLQP…PTRRPPFTRG (86 aa). The segment covering 1485-1502 has biased composition (polar residues); the sequence is GDQSPGLGTQPKLPSSSG. Thr-1512 bears the Phosphothreonine mark. Residues 1516-1531 are compositionally biased toward low complexity; the sequence is PLSPSTPTRRPPFTRG. At Ser-1518 the chain carries Phosphoserine. Phosphothreonine occurs at positions 1521 and 1523. Ser-1537 and Ser-1540 each carry phosphoserine. ZZ-type zinc fingers lie at residues 1778–1833 and 1827–1882; these read NVDI…FTCD and NMEF…MVTI. Zn(2+)-binding residues include Cys-1783, Cys-1786, Cys-1797, Cys-1800, Cys-1806, Cys-1809, His-1819, His-1823, Cys-1832, Cys-1835, Cys-1846, Cys-1849, Cys-1855, Cys-1858, His-1868, and His-1872. Disordered stretches follow at residues 1994 to 2078 and 2426 to 2455; these read AVQG…PSPE and LELD…KLDP. The span at 2009 to 2027 shows a compositional bias: basic and acidic residues; sequence AVHEEIRPVDFKQRNKADK. Residues 2033–2043 show a composition bias toward polar residues; sequence KDPSCQTQISD. A compositionally biased stretch (basic and acidic residues) spans 2426-2440; sequence LELDERGDREEEVER. Ser-2444 carries the phosphoserine modification. Lys-2667 carries the N6-acetyllysine modification.

Interacts with KLF6 and KLF9. Interacts via (ZZ-type 2 zinc finger) with histone H3 trimethylated at 'Lys-4' (H3K4me3) and histone H3 acetylated at 'Lys-4' (H3K4ac). As to expression, expressed at low levels in cerebellum.

Its function is as follows. Histone H3 reader which may act as a transcriptional coactivator for KLF6 and KLF9 transcription factors. In Homo sapiens (Human), this protein is Zinc finger ZZ-type and EF-hand domain-containing protein 1.